The chain runs to 120 residues: Ribosome-binding factor A (120 aa).

The protein belongs to the RbfA family. As to quaternary structure, monomer. Binds 30S ribosomal subunits, but not 50S ribosomal subunits or 70S ribosomes.

Its subcellular location is the cytoplasm. One of several proteins that assist in the late maturation steps of the functional core of the 30S ribosomal subunit. Associates with free 30S ribosomal subunits (but not with 30S subunits that are part of 70S ribosomes or polysomes). Required for efficient processing of 16S rRNA. May interact with the 5'-terminal helix region of 16S rRNA. The polypeptide is Ribosome-binding factor A (Chlorobaculum tepidum (strain ATCC 49652 / DSM 12025 / NBRC 103806 / TLS) (Chlorobium tepidum)).